The sequence spans 256 residues: 5'-nucleotidase SurE (256 aa).

Asp8, Asp9, Ser39, and Asn95 together coordinate a divalent metal cation.

This sequence belongs to the SurE nucleotidase family. A divalent metal cation is required as a cofactor.

Its subcellular location is the cytoplasm. It carries out the reaction a ribonucleoside 5'-phosphate + H2O = a ribonucleoside + phosphate. Nucleotidase that shows phosphatase activity on nucleoside 5'-monophosphates. This chain is 5'-nucleotidase SurE, found in Methanosphaera stadtmanae (strain ATCC 43021 / DSM 3091 / JCM 11832 / MCB-3).